The chain runs to 199 residues: NADH-quinone oxidoreductase subunit C (199 aa).

The protein belongs to the complex I 30 kDa subunit family. In terms of assembly, NDH-1 is composed of 14 different subunits. Subunits NuoB, C, D, E, F, and G constitute the peripheral sector of the complex.

It localises to the cell inner membrane. It catalyses the reaction a quinone + NADH + 5 H(+)(in) = a quinol + NAD(+) + 4 H(+)(out). Its function is as follows. NDH-1 shuttles electrons from NADH, via FMN and iron-sulfur (Fe-S) centers, to quinones in the respiratory chain. The immediate electron acceptor for the enzyme in this species is believed to be ubiquinone. Couples the redox reaction to proton translocation (for every two electrons transferred, four hydrogen ions are translocated across the cytoplasmic membrane), and thus conserves the redox energy in a proton gradient. This is NADH-quinone oxidoreductase subunit C from Roseobacter denitrificans (strain ATCC 33942 / OCh 114) (Erythrobacter sp. (strain OCh 114)).